The primary structure comprises 589 residues: Aspartate--tRNA ligase (589 aa).

Position 172 (glutamate 172) interacts with L-aspartate. The tract at residues 196 to 199 is aspartate; that stretch reads QLFK. Arginine 218 contributes to the L-aspartate binding site. ATP-binding positions include 218-220 and glutamine 227; that span reads RDE. Residue histidine 449 coordinates L-aspartate. ATP is bound at residue glutamate 483. Arginine 490 serves as a coordination point for L-aspartate. 535–538 provides a ligand contact to ATP; sequence GLDR.

It belongs to the class-II aminoacyl-tRNA synthetase family. Type 1 subfamily. Homodimer.

Its subcellular location is the cytoplasm. It catalyses the reaction tRNA(Asp) + L-aspartate + ATP = L-aspartyl-tRNA(Asp) + AMP + diphosphate. Functionally, catalyzes the attachment of L-aspartate to tRNA(Asp) in a two-step reaction: L-aspartate is first activated by ATP to form Asp-AMP and then transferred to the acceptor end of tRNA(Asp). This chain is Aspartate--tRNA ligase, found in Haemophilus ducreyi (strain 35000HP / ATCC 700724).